The following is a 299-amino-acid chain: Probable 3-hydroxyisobutyrate dehydrogenase-like 2, mitochondrial (299 aa).

NAD(+) is bound by residues 14–43 (TRIG…TVYA) and S108. The active site involves K182. K250 provides a ligand contact to NAD(+).

This sequence belongs to the HIBADH-related family. 3-hydroxyisobutyrate dehydrogenase subfamily.

It localises to the mitochondrion. The catalysed reaction is 3-hydroxy-2-methylpropanoate + NAD(+) = 2-methyl-3-oxopropanoate + NADH + H(+). Its pathway is amino-acid degradation; L-valine degradation. The polypeptide is Probable 3-hydroxyisobutyrate dehydrogenase-like 2, mitochondrial (Arabidopsis thaliana (Mouse-ear cress)).